The following is a 347-amino-acid chain: NADH-ubiquinone oxidoreductase chain 2 (347 aa).

11 consecutive transmembrane segments (helical) span residues 3-23 (PPILIIIMSTVMSGTMIVLTS), 25-45 (HWLLTWIGFEMNMLAIIPILM), 60-80 (FLTQATASMLLMMGIIINLMF), 96-116 (GLVTIALTMKLGMAPFHFWVP), 122-142 (ISLSSGMILLTWQKIAPLSVL), 153-173 (LLITMAIASVLIGGWGGLNQT), 178-198 (ILAYSSIAHMGWMTVILTYNP), 200-220 (LMVLNLTIYITMTLSTFMLFM), 237-257 (LPLMTSLILMLMMSLGGLPPL), 274-294 (DMIILPTFMAITALLNLYFYM), and 323-343 (IILLPPLIIISTMLLPMTPMM).

It belongs to the complex I subunit 2 family. As to quaternary structure, core subunit of respiratory chain NADH dehydrogenase (Complex I) which is composed of 45 different subunits. Interacts with TMEM242.

It is found in the mitochondrion inner membrane. It carries out the reaction a ubiquinone + NADH + 5 H(+)(in) = a ubiquinol + NAD(+) + 4 H(+)(out). Its function is as follows. Core subunit of the mitochondrial membrane respiratory chain NADH dehydrogenase (Complex I) which catalyzes electron transfer from NADH through the respiratory chain, using ubiquinone as an electron acceptor. Essential for the catalytic activity and assembly of complex I. The sequence is that of NADH-ubiquinone oxidoreductase chain 2 from Phoca vitulina (Harbor seal).